Here is a 419-residue protein sequence, read N- to C-terminus: Dual specificity mitogen-activated protein kinase kinase 7 (419 aa).

Alanine 2 carries the N-acetylalanine modification. Residues 2-30 (AASSLEQKLSRLEAKLKQENREARRRIDL) are a coiled coil. Residues 18-30 (KQENREARRRIDL) are compositionally biased toward basic and acidic residues. The tract at residues 18 to 77 (KQENREARRRIDLNLDISPQRPRPTLQLPLANDGGSRSPSSESSPQHPTPPSRPRHMLGL) is disordered. Low complexity predominate over residues 36–63 (PQRPRPTLQLPLANDGGSRSPSSESSPQ). Positions 37–57 (QRPRPTLQLPLANDGGSRSPS) are d Domain. The Protein kinase domain occupies 120 to 380 (LENLGEMGSG…YNKLLEHSFI (261 aa)). ATP contacts are provided by residues 126–134 (MGSGTCGQV) and lysine 149. Aspartate 243 serves as the catalytic Proton acceptor. At serine 271 the chain carries Phosphoserine; by MAP3K. Position 275 is a phosphothreonine; by MAP3K (threonine 275). Residues 377 to 400 (HSFIKHYETLEVDVASWFKDVMAK) are DVD domain. Phosphoserine is present on serine 411.

Belongs to the protein kinase superfamily. STE Ser/Thr protein kinase family. MAP kinase kinase subfamily. In terms of assembly, interacts with VRK2. Interacts (via its D domain) with its substrates MAPK8/JNK1, MAPK9/JNK2 and MAPK10/JNK3. Interacts (via its DVD domain) with MAP3Ks activators like MAP3K5/ASK1 and MAP3K1/MEKK1. Interacts with MAPK8IP1/JIP1, MAPK8IP2/JIP2 and MAPK8IP3/JIP3 scaffold proteins. Interacts with RASSF7, the interaction promotes phosphorylation. Found in a complex with SH3RF1, RAC1, MAP3K11/MLK3, MAPK8IP1/JIP1 and MAPK8/JNK1. Found in a complex with SH3RF1, RAC2, MAP3K7/TAK1, MAPK8IP1/JIP1, MAPK8/JNK1 and MAPK9/JNK2. Mg(2+) is required as a cofactor. Activated by phosphorylation on Ser-271 and Thr-275 by MAP kinase kinase kinases (MAP3Ks).

It is found in the nucleus. The protein localises to the cytoplasm. The catalysed reaction is L-seryl-[protein] + ATP = O-phospho-L-seryl-[protein] + ADP + H(+). The enzyme catalyses L-threonyl-[protein] + ATP = O-phospho-L-threonyl-[protein] + ADP + H(+). It carries out the reaction L-tyrosyl-[protein] + ATP = O-phospho-L-tyrosyl-[protein] + ADP + H(+). With respect to regulation, activated by phosphorylation by specific MAP kinase kinase kinases such as MAP3K1/MEKK1, MAP3K3/MEKK3, MAP3K11/MLK3 and MAP3K12/DLK. Functionally, dual specificity protein kinase which acts as an essential component of the MAP kinase signal transduction pathway. Essential component of the stress-activated protein kinase/c-Jun N-terminal kinase (SAP/JNK) signaling pathway. With MAP2K4/MKK4, is the one of the only known kinase to directly activate the stress-activated protein kinase/c-Jun N-terminal kinases MAPK8/JNK1, MAPK9/JNK2 and MAPK10/JNK3. MAP2K4/MKK4 and MAP2K7/MKK7 both activate the JNKs by phosphorylation, but they differ in their preference for the phosphorylation site in the Thr-Pro-Tyr motif. MAP2K4/MKK4 shows preference for phosphorylation of the Tyr residue and MAP2K7/MKK7 for the Thr residue. The monophosphorylation of JNKs on the Thr residue is sufficient to increase JNK activity indicating that MAP2K7/MKK7 is important to trigger JNK activity, while the additional phosphorylation of the Tyr residue by MAP2K4/MKK4 ensures optimal JNK activation. Has a specific role in JNK signal transduction pathway activated by pro-inflammatory cytokines. The MKK/JNK signaling pathway is also involved in mitochondrial death signaling pathway, including the release cytochrome c, leading to apoptosis. Part of a non-canonical MAPK signaling pathway, composed of the upstream MAP3K12 kinase and downstream MAP kinases MAPK1/ERK2 and MAPK3/ERK1, that enhances the AP-1-mediated transcription of APP in response to APOE. The polypeptide is Dual specificity mitogen-activated protein kinase kinase 7 (Rattus norvegicus (Rat)).